A 1297-amino-acid polypeptide reads, in one-letter code: Phosphoribosylformylglycinamidine synthase (1297 aa).

A disordered region spans residues isoleucine 303 to proline 329. Glycine 308–aspartate 319 serves as a coordination point for ATP. Positions 680, 719, 723, and 887 each coordinate Mg(2+). Position 889 (serine 889) interacts with ATP. Positions isoleucine 1045–phenylalanine 1297 constitute a Glutamine amidotransferase type-1 domain. The Nucleophile role is filled by cysteine 1138. Catalysis depends on residues histidine 1263 and glutamate 1265.

The protein in the N-terminal section; belongs to the FGAMS family. Monomer.

It is found in the cytoplasm. It carries out the reaction N(2)-formyl-N(1)-(5-phospho-beta-D-ribosyl)glycinamide + L-glutamine + ATP + H2O = 2-formamido-N(1)-(5-O-phospho-beta-D-ribosyl)acetamidine + L-glutamate + ADP + phosphate + H(+). The protein operates within purine metabolism; IMP biosynthesis via de novo pathway; 5-amino-1-(5-phospho-D-ribosyl)imidazole from N(2)-formyl-N(1)-(5-phospho-D-ribosyl)glycinamide: step 1/2. Its function is as follows. Phosphoribosylformylglycinamidine synthase involved in the purines biosynthetic pathway. Catalyzes the ATP-dependent conversion of formylglycinamide ribonucleotide (FGAR) and glutamine to yield formylglycinamidine ribonucleotide (FGAM) and glutamate. The protein is Phosphoribosylformylglycinamidine synthase of Haemophilus influenzae (strain 86-028NP).